Here is a 263-residue protein sequence, read N- to C-terminus: 4-hydroxy-tetrahydrodipicolinate reductase (263 aa).

10–15 lines the NAD(+) pocket; the sequence is GASGKM. An NADP(+)-binding site is contributed by arginine 38. NAD(+)-binding positions include 97 to 99 and 123 to 126; these read GTT and APNF. Histidine 153 (proton donor/acceptor) is an active-site residue. (S)-2,3,4,5-tetrahydrodipicolinate is bound at residue histidine 154. Catalysis depends on lysine 157, which acts as the Proton donor. 163-164 contributes to the (S)-2,3,4,5-tetrahydrodipicolinate binding site; that stretch reads GT.

The protein belongs to the DapB family.

Its subcellular location is the cytoplasm. It carries out the reaction (S)-2,3,4,5-tetrahydrodipicolinate + NAD(+) + H2O = (2S,4S)-4-hydroxy-2,3,4,5-tetrahydrodipicolinate + NADH + H(+). The enzyme catalyses (S)-2,3,4,5-tetrahydrodipicolinate + NADP(+) + H2O = (2S,4S)-4-hydroxy-2,3,4,5-tetrahydrodipicolinate + NADPH + H(+). It functions in the pathway amino-acid biosynthesis; L-lysine biosynthesis via DAP pathway; (S)-tetrahydrodipicolinate from L-aspartate: step 4/4. In terms of biological role, catalyzes the conversion of 4-hydroxy-tetrahydrodipicolinate (HTPA) to tetrahydrodipicolinate. The protein is 4-hydroxy-tetrahydrodipicolinate reductase of Dehalococcoides mccartyi (strain ATCC BAA-2266 / KCTC 15142 / 195) (Dehalococcoides ethenogenes (strain 195)).